Consider the following 357-residue polypeptide: NADPH HC-toxin reductase 1 (357 aa).

NADP(+)-binding positions include Arg-40, Lys-47, 68-69 (DL), 88-90 (VAT), Tyr-178, Lys-182, 207-210 (LGLV), and Thr-222. Lys-182 acts as the Proton donor in catalysis.

Belongs to the NAD(P)-dependent epimerase/dehydratase family.

Activity is sensitive to heat, dependent on NADPH, and inhibited by p-hydroxymercuribenzoate and disulfiram. In tandem with Hm2, NADPH-dependent Helminthosporium carbonum (HC) toxin reductase (HCTR), which inactivates HC toxin, a cyclic tetrapeptide produced by the fungus Cochliobolus carbonum to permit infection and acting as an inhibitor of host histone deacetylases (HDACs), thus conferring resistance against C.carbonum race 1 in resistant cultivars (e.g. cv. B73 and cv. Wisconsin 22). Catalyzes the production of 8-hydroxy derivative of HC-toxin via the reduction of the 8-keto group of 2-amino-9,10-epoxy-8-oxo-decanoic acid, an amino acid of the HC-toxin. The chain is NADPH HC-toxin reductase 1 from Zea mays (Maize).